The following is a 332-amino-acid chain: DNA-directed RNA polymerase subunit alpha (332 aa).

Residues 1–244 (MKKHAKVYYS…AHLNLLADVE (244 aa)) form an alpha N-terminal domain (alpha-NTD) region. The segment at 259–332 (IKEEPIRRFS…NYKNENKGEN (74 aa)) is alpha C-terminal domain (alpha-CTD).

This sequence belongs to the RNA polymerase alpha chain family. Homodimer. The RNAP catalytic core consists of 2 alpha, 1 beta, 1 beta' and 1 omega subunit. When a sigma factor is associated with the core the holoenzyme is formed, which can initiate transcription.

It catalyses the reaction RNA(n) + a ribonucleoside 5'-triphosphate = RNA(n+1) + diphosphate. Functionally, DNA-dependent RNA polymerase catalyzes the transcription of DNA into RNA using the four ribonucleoside triphosphates as substrates. The sequence is that of DNA-directed RNA polymerase subunit alpha from Mesomycoplasma hyopneumoniae (strain 232) (Mycoplasma hyopneumoniae).